The primary structure comprises 668 residues: Fe(2+) transporter FeoB (668 aa).

Positions 3 to 165 (SYEIALIGNP…KKAISIAVKD (163 aa)) constitute a FeoB-type G domain. A GTP-binding site is contributed by 10 to 17 (GNPNVGKS). N21, A22, T24, and G25 together coordinate Mg(2+). Residues 35–39 (GVTVE), 56–59 (DLPG), 116–119 (NKMD), and 145–147 (SAA) contribute to the GTP site. A run of 8 helical transmembrane segments spans residues 344–364 (VGAV…ISFL), 386–406 (LPGK…PAIM), 418–438 (ILTI…IYAL), 450–470 (VVIL…AFLF), 515–535 (IIVF…SGYL), 574–594 (ALVF…MLYG), 613–633 (AYAF…LAVI), and 643–663 (LFAV…ISVI).

Belongs to the TRAFAC class TrmE-Era-EngA-EngB-Septin-like GTPase superfamily. FeoB GTPase (TC 9.A.8) family. The crystallized N-terminal domain is a homodimer.

It localises to the cell membrane. In terms of biological role, probable transporter of a GTP-driven Fe(2+) uptake system, might be able to transport Fe(2+) into or out of the cell. The sequence is that of Fe(2+) transporter FeoB from Methanocaldococcus jannaschii (strain ATCC 43067 / DSM 2661 / JAL-1 / JCM 10045 / NBRC 100440) (Methanococcus jannaschii).